Reading from the N-terminus, the 157-residue chain is S-ribosylhomocysteine lyase (157 aa).

The Fe cation site is built by His54, His58, and Cys126.

The protein belongs to the LuxS family. Homodimer. The cofactor is Fe cation.

It catalyses the reaction S-(5-deoxy-D-ribos-5-yl)-L-homocysteine = (S)-4,5-dihydroxypentane-2,3-dione + L-homocysteine. In terms of biological role, involved in the synthesis of autoinducer 2 (AI-2) which is secreted by bacteria and is used to communicate both the cell density and the metabolic potential of the environment. The regulation of gene expression in response to changes in cell density is called quorum sensing. Catalyzes the transformation of S-ribosylhomocysteine (RHC) to homocysteine (HC) and 4,5-dihydroxy-2,3-pentadione (DPD). In Bacillus cytotoxicus (strain DSM 22905 / CIP 110041 / 391-98 / NVH 391-98), this protein is S-ribosylhomocysteine lyase.